Consider the following 254-residue polypeptide: MSVSIILMGLFVGALVGLTGVGGAALLTPLLIVLGINPSIAVGTDLVYNSITKLFGVASHWRQKTINFKLVKYLAIGSIPSASLAIGILHLFPAFHQHQEEIIKHALGYVLTLVAISIIVRLFLDRKLRPNRWQLMPLENKRALTILIGVVFGFIVGLTSIGSGSLFAIAMIYLFNMKASQIVGTDIAHAFLLVTAAGILNASFGSVDYMLAANLLLGSIPGVLIGSHLSPRFSPRPLQFIMASIILVSGLKLI.

The next 6 membrane-spanning stretches (helical) occupy residues 5–25 (IILM…GGAA), 75–95 (AIGS…FPAF), 105–125 (HALG…LFLD), 143–163 (ALTI…SIGS), 187–207 (IAHA…FGSV), and 209–229 (YMLA…GSHL).

It belongs to the 4-toluene sulfonate uptake permease (TSUP) (TC 2.A.102) family.

It is found in the cell membrane. The polypeptide is Probable membrane transporter protein YjnA (yjnA) (Bacillus subtilis (strain 168)).